The primary structure comprises 341 residues: GTP 3',8-cyclase (341 aa).

The 221-residue stretch at 11 to 231 folds into the Radical SAM core domain; sequence QKSRPLRDLR…RIINEDMPIE (221 aa). GTP is bound at residue arginine 20. The [4Fe-4S] cluster site is built by cysteine 27 and cysteine 31. Tyrosine 33 is a binding site for S-adenosyl-L-methionine. Residue cysteine 34 coordinates [4Fe-4S] cluster. Arginine 75 provides a ligand contact to GTP. Glycine 79 provides a ligand contact to S-adenosyl-L-methionine. Threonine 106 is a binding site for GTP. Serine 130 serves as a coordination point for S-adenosyl-L-methionine. Lysine 167 serves as a coordination point for GTP. Methionine 201 is a binding site for S-adenosyl-L-methionine. Residues cysteine 265 and cysteine 268 each coordinate [4Fe-4S] cluster. 270 to 272 contributes to the GTP binding site; the sequence is RAR. Cysteine 282 serves as a coordination point for [4Fe-4S] cluster.

This sequence belongs to the radical SAM superfamily. MoaA family. Monomer and homodimer. It depends on [4Fe-4S] cluster as a cofactor.

The catalysed reaction is GTP + AH2 + S-adenosyl-L-methionine = (8S)-3',8-cyclo-7,8-dihydroguanosine 5'-triphosphate + 5'-deoxyadenosine + L-methionine + A + H(+). The protein operates within cofactor biosynthesis; molybdopterin biosynthesis. Functionally, catalyzes the cyclization of GTP to (8S)-3',8-cyclo-7,8-dihydroguanosine 5'-triphosphate. The protein is GTP 3',8-cyclase of Bacillus licheniformis (strain ATCC 14580 / DSM 13 / JCM 2505 / CCUG 7422 / NBRC 12200 / NCIMB 9375 / NCTC 10341 / NRRL NRS-1264 / Gibson 46).